The chain runs to 458 residues: UDP-N-acetylmuramoylalanine--D-glutamate ligase (458 aa).

ATP is bound at residue 124–130 (GSDGKTT).

It belongs to the MurCDEF family.

The protein resides in the cytoplasm. The catalysed reaction is UDP-N-acetyl-alpha-D-muramoyl-L-alanine + D-glutamate + ATP = UDP-N-acetyl-alpha-D-muramoyl-L-alanyl-D-glutamate + ADP + phosphate + H(+). It participates in cell wall biogenesis; peptidoglycan biosynthesis. Functionally, cell wall formation. Catalyzes the addition of glutamate to the nucleotide precursor UDP-N-acetylmuramoyl-L-alanine (UMA). The polypeptide is UDP-N-acetylmuramoylalanine--D-glutamate ligase (Clostridium kluyveri (strain NBRC 12016)).